A 446-amino-acid chain; its full sequence is MNAQEANFDGLVGPTHNYAGLSFGNVASLNNEKSAANPKAAAKQGLRKMKQLADLGFAQGVLPPQERPSLRLLRELGFSGKDADVIAKAAKQAPELLAAASSASAMWTANAATVSPSADTSDGRVHFTPANLCSKLHRAIEHEATRRTLSTLFADPTHFAVHEALTGTPALGDEGAANHTRFCAEYGKPGIEFFVYGRAEYRRGPEPKRFPARQTFEASRAVAHRHGLAEEATVYAQQDPDVIDAGVFHNDVISVGNRDTLFTHERAFVNKQAIYDTLTAALDARGARLNVIEVPDAAVSVNDAVTSYLFNSQLLSRADGSQVLVVPQECRENARVAAYLDQLAAGNGPIHDVLVFDLRESMKNGGGPACLRLRVVLNDAERAAVTSNVWINDTLFASLDAWIDKHYRDRLAPEDLADPALLDESRTALDELTQILRVGSLYDFQR.

Substrate is bound by residues 19–28, Asn110, and 137–138; these read AGLSFGNVAS and HR. The active site involves Glu174. Arg213 contributes to the substrate binding site. Residue His249 is part of the active site. Substrate is bound by residues Asp251 and Asn364. The active-site Nucleophile is the Cys370.

It belongs to the succinylarginine dihydrolase family. As to quaternary structure, homodimer.

The catalysed reaction is N(2)-succinyl-L-arginine + 2 H2O + 2 H(+) = N(2)-succinyl-L-ornithine + 2 NH4(+) + CO2. Its pathway is amino-acid degradation; L-arginine degradation via AST pathway; L-glutamate and succinate from L-arginine: step 2/5. In terms of biological role, catalyzes the hydrolysis of N(2)-succinylarginine into N(2)-succinylornithine, ammonia and CO(2). The protein is N-succinylarginine dihydrolase of Burkholderia cenocepacia (strain HI2424).